The sequence spans 780 residues: Aconitate hydratase, mitochondrial (780 aa).

The transit peptide at 1 to 27 (MAPYSLLVTRLQKALGVRQYHVASVLC) directs the protein to the mitochondrion. Lysine 31 is subject to N6-succinyllysine. Lysine 50 carries the post-translational modification N6-acetyllysine; alternate. Residue lysine 50 is modified to N6-succinyllysine; alternate. Residue glutamine 99 participates in substrate binding. Residues lysine 138 and lysine 144 each carry the N6-acetyllysine; alternate modification. N6-succinyllysine; alternate occurs at positions 138 and 144. 192–194 (DSH) serves as a coordination point for substrate. N6-acetyllysine; alternate is present on lysine 233. Lysine 233 carries the N6-succinyllysine; alternate modification. Cysteine 385 lines the [4Fe-4S] cluster pocket. N6-succinyllysine is present on lysine 411. [4Fe-4S] cluster-binding residues include cysteine 448 and cysteine 451. Substrate is bound by residues arginine 474 and arginine 479. 2 positions are modified to N6-acetyllysine; alternate: lysine 517 and lysine 523. N6-succinyllysine; alternate occurs at positions 517 and 523. The segment covering 524-537 (LEAPDADELPRSDF) has biased composition (basic and acidic residues). Residues 524–560 (LEAPDADELPRSDFDPGQDTYQHPPKDSSGQRVDVSP) form a disordered region. Residue lysine 549 is modified to N6-succinyllysine. Positions 551–560 (SSGQRVDVSP) are enriched in polar residues. Serine 559 carries the phosphoserine modification. At lysine 573 the chain carries N6-acetyllysine; alternate. N6-succinyllysine; alternate is present on lysine 573. N6-succinyllysine occurs at positions 577 and 591. An N6-acetyllysine; alternate modification is found at lysine 605. Lysine 605 bears the N6-succinyllysine; alternate mark. Arginine 607 is a binding site for substrate. N6-succinyllysine is present on lysine 628. Serine 670 carries the post-translational modification Phosphoserine. 670-671 (SR) lines the substrate pocket. N6-succinyllysine is present on lysine 689. 2 positions are modified to N6-acetyllysine; alternate: lysine 723 and lysine 730. Lysine 723 and lysine 730 each carry N6-succinyllysine; alternate. N6-acetyllysine is present on residues lysine 736, lysine 739, and lysine 743.

This sequence belongs to the aconitase/IPM isomerase family. Monomer. The cofactor is [4Fe-4S] cluster. Post-translationally, forms covalent cross-links mediated by transglutaminase TGM2, between a glutamine and the epsilon-amino group of a lysine residue, forming homopolymers and heteropolymers.

The protein resides in the mitochondrion. It catalyses the reaction citrate = D-threo-isocitrate. It participates in carbohydrate metabolism; tricarboxylic acid cycle; isocitrate from oxaloacetate: step 2/2. In terms of biological role, catalyzes the isomerization of citrate to isocitrate via cis-aconitate. The polypeptide is Aconitate hydratase, mitochondrial (Aco2) (Mus musculus (Mouse)).